Consider the following 1164-residue polypeptide: FH1/FH2 domain-containing protein 1 (1164 aa).

The 406-residue stretch at 53–458 (AQIPAVHRLL…AAETEKQVAL (406 aa)) folds into the GBD/FH3 domain. Disordered regions lie at residues 340–411 (DIEE…VGPP) and 470–500 (MPNEAGGHPDARQLWDSPETAPAARTPQSPA). Basic and acidic residues predominate over residues 355–368 (KPSSEEGKRSRRSL). S367 is subject to Phosphoserine. The segment covering 402–411 (GPASSPVGPP) has biased composition (low complexity). S486 is modified (phosphoserine). The FH1 domain maps to 487-615 (PETAPAARTP…LAAPLPHSVP (129 aa)). T495 bears the Phosphothreonine mark. 3 positions are modified to phosphoserine: S498, S523, and S573. Residues 566 to 619 (GKDIPAPSPPLPLLSGVPPPPPLPPPPPIKGPFPPPPPLPLAAPLPHSVPDSSA) are disordered. Positions 571–608 (APSPPLPLLSGVPPPPPLPPPPPIKGPFPPPPPLPLAA) are enriched in pro residues. The interval 612–807 (HSVPDSSALP…AEPLFDLKVG (196 aa)) is interaction with ROCK1. Residues 616-1013 (DSSALPTKRK…YRERNKTRGR (398 aa)) enclose the FH2 domain. T690 carries the post-translational modification Phosphothreonine. Residues 884-921 (LTRCAKVDFEQLTENLGQLERRSRAAEESLRSLAKHEL) are a coiled coil. Residues 1020 to 1143 (KFSGVAGEAP…NRKSLRRTLK (124 aa)) are disordered. Residues 1028–1041 (APSNPSVPVAVSSG) show a composition bias toward low complexity. Residues 1053–1133 (MKSLLTSRPE…AARERKRSRG (81 aa)) enclose the DAD domain. Positions 1073–1089 (MVQSSSPIMPTVGPSTA) are enriched in polar residues. Basic residues predominate over residues 1127 to 1142 (ERKRSRGNRKSLRRTL).

It belongs to the formin homology family. Self-associates via the FH2 domain. Binds to F-actin via its N-terminus. Binds to the cytoplasmic domain of CD21 via its C-terminus. Interacts with ROCK1 in a Src-dependent manner. In terms of processing, phosphorylated by ROCK1. In terms of tissue distribution, ubiquitous. Highly expressed in spleen.

Its subcellular location is the cytoplasm. It is found in the cytoskeleton. It localises to the cell projection. The protein resides in the bleb. In terms of biological role, required for the assembly of F-actin structures, such as stress fibers. Depends on the Rho-ROCK cascade for its activity. Contributes to the coordination of microtubules with actin fibers and plays a role in cell elongation. Acts synergistically with ROCK1 to promote SRC-dependent non-apoptotic plasma membrane blebbing. The polypeptide is FH1/FH2 domain-containing protein 1 (FHOD1) (Homo sapiens (Human)).